A 179-amino-acid chain; its full sequence is Large ribosomal subunit protein uL5 (179 aa).

It belongs to the universal ribosomal protein uL5 family. Part of the 50S ribosomal subunit; part of the 5S rRNA/L5/L18/L25 subcomplex. Contacts the 5S rRNA and the P site tRNA. Forms a bridge to the 30S subunit in the 70S ribosome.

This is one of the proteins that bind and probably mediate the attachment of the 5S RNA into the large ribosomal subunit, where it forms part of the central protuberance. In the 70S ribosome it contacts protein S13 of the 30S subunit (bridge B1b), connecting the 2 subunits; this bridge is implicated in subunit movement. Contacts the P site tRNA; the 5S rRNA and some of its associated proteins might help stabilize positioning of ribosome-bound tRNAs. This chain is Large ribosomal subunit protein uL5, found in Aliivibrio salmonicida (strain LFI1238) (Vibrio salmonicida (strain LFI1238)).